The following is a 545-amino-acid chain: MITPSEFKRLYKIIEVQLRYGLDDFLPEDPRTKMPKMARKSLFWIKNQHPDKSLGERLRLALQELGPVWIKFGQMMSTRRDLFPPHIADQLALLQDQVEPFDGNLAKEHMELSLGGPIETWFDDFDETPLASASIAQVHTATLKENGREVVLKVIRPDILPVIQADIKLMYRMAHIVARLLPEARLLRPVEVVREYEKTLLDELNMMREAANSIQLRRNFEDSDTLYVPEMFTDYSSTNLLVMERIYGIQVSDIDALIANGTNMKLLSENAVNIFFTQVFRDSFFHADMHPGNIFVSYENPETPQWIALDCGIVGTLNRDDKRYLAENLLAFFHRDYRKVAELHVDSGWVPQDTNIDEFEFAIRTVCEPIFEKPLCDISFGHVLLNLFNTARRFDMEVQPQLMLLQKTLLYVEGLGRQLYPQLDLWITAKPFLEDWMSRQVGPQAIVEAVKSKAPFWAEKLPELPELLYDSLRQGKVMNQRIDKLYDNFMESRRSQGLARFYFGIGATLVVCSAILFSNHVETIPVASAAMGVTFWLLGWRACRK.

Positions 124 to 502 constitute a Protein kinase domain; the sequence is DFDETPLASA…RRSQGLARFY (379 aa). Residues 130–138 and Lys153 each bind ATP; that span reads LASASIAQV. Catalysis depends on Asp288, which acts as the Proton acceptor. The next 2 helical transmembrane spans lie at 498 to 517 and 521 to 540; these read LARF…AILF and VETI…LLGW.

It belongs to the ABC1 family. UbiB subfamily.

Its subcellular location is the cell inner membrane. It participates in cofactor biosynthesis; ubiquinone biosynthesis [regulation]. Is probably a protein kinase regulator of UbiI activity which is involved in aerobic coenzyme Q (ubiquinone) biosynthesis. The protein is Probable protein kinase UbiB of Photobacterium profundum (strain SS9).